A 665-amino-acid chain; its full sequence is Probable arginine--tRNA ligase, cytoplasmic (665 aa).

L-arginine-binding positions include 204–206 (SPN), H215, Y390, D394, and Q418. The short motif at 205 to 216 (PNIAKQMHVGHL) is the 'HIGH' region element. Positions 535–549 (NTAVYLLYTYTRICS) are interaction with tRNA.

Belongs to the class-I aminoacyl-tRNA synthetase family.

It localises to the cytoplasm. It is found in the cytosol. It catalyses the reaction tRNA(Arg) + L-arginine + ATP = L-arginyl-tRNA(Arg) + AMP + diphosphate. Its function is as follows. Forms part of a macromolecular complex that catalyzes the attachment of specific amino acids to cognate tRNAs during protein synthesis. The sequence is that of Probable arginine--tRNA ligase, cytoplasmic from Drosophila melanogaster (Fruit fly).